The primary structure comprises 757 residues: RNA-directed RNA polymerase catalytic subunit (757 aa).

Positions 54–77 are disordered; sequence KWTTNTETGAAQLNPIDGPLPEDN. The segment covering 55–64 has biased composition (polar residues); the sequence is WTTNTETGAA. 2 consecutive short sequence motifs (nuclear localization signal) follow at residues 187–195 and 203–216; these read RKRRVRDNM and RTIG…NKRS. A promoter-binding site region spans residues 249 to 256; that stretch reads RGFVYFVE. Residues 286–483 enclose the RdRp catalytic domain; the sequence is VRKMMTNSQD…GINMSKKKSY (198 aa).

The protein belongs to the influenza viruses polymerase PB1 family. In terms of assembly, influenza RNA polymerase is composed of three subunits: PB1, PB2 and PA. Interacts (via N-terminus) with PA (via C-terminus). Interacts (via C-terminus) with PB2 (via N-terminus); this interaction is essential for transcription initiation. Phosphorylated by host PRKCA.

Its subcellular location is the host nucleus. The protein localises to the host cytoplasm. The enzyme catalyses RNA(n) + a ribonucleoside 5'-triphosphate = RNA(n+1) + diphosphate. Functionally, RNA-dependent RNA polymerase which is responsible for replication and transcription of virus RNA segments. The transcription of viral mRNAs occurs by a unique mechanism called cap-snatching. 5' methylated caps of cellular mRNAs are cleaved after 10-13 nucleotides by PA. In turn, these short capped RNAs are used as primers by PB1 for transcription of viral mRNAs. During virus replication, PB1 initiates RNA synthesis and copy vRNA into complementary RNA (cRNA) which in turn serves as a template for the production of more vRNAs. This Aves (whales) protein is RNA-directed RNA polymerase catalytic subunit.